A 112-amino-acid chain; its full sequence is Large ribosomal subunit protein eL30 (112 aa).

This sequence belongs to the eukaryotic ribosomal protein eL30 family.

The protein is Large ribosomal subunit protein eL30 (RPL30) of Euphorbia esula (Leafy spurge).